We begin with the raw amino-acid sequence, 337 residues long: Eukaryotic translation initiation factor 3 subunit H (337 aa).

The MPN domain maps to 21–153 (VQCDGLAVMK…LKAYRLTPQA (133 aa)).

The protein belongs to the eIF-3 subunit H family. Component of the eukaryotic translation initiation factor 3 (eIF-3) complex. The eIF-3 complex interacts with pix. Interacts with mxt.

It is found in the cytoplasm. Its function is as follows. Component of the eukaryotic translation initiation factor 3 (eIF-3) complex, which is involved in protein synthesis of a specialized repertoire of mRNAs and, together with other initiation factors, stimulates binding of mRNA and methionyl-tRNAi to the 40S ribosome. The eIF-3 complex specifically targets and initiates translation of a subset of mRNAs involved in cell proliferation. This chain is Eukaryotic translation initiation factor 3 subunit H, found in Drosophila ananassae (Fruit fly).